A 1014-amino-acid polypeptide reads, in one-letter code: Regulator of telomere elongation helicase 1 homolog (1014 aa).

A Helicase ATP-binding domain is found at 7–308; the sequence is RGVDVDFPYD…NSADKQFDPE (302 aa). Residue 42–49 coordinates ATP; it reads SPTGTGKT. Residues 70–85 are compositionally biased toward gly residues; sequence GGGGGGGGGGGGGGGS. The segment at 70–106 is disordered; it reads GGGGGGGGGGGGGGGSQQPPYGSQPSGSQHSGGSASQ. Residues 86–106 show a composition bias toward low complexity; sequence QQPPYGSQPSGSQHSGGSASQ. Residues Cys149, Cys170, Cys175, and Cys211 each coordinate [4Fe-4S] cluster. The DEAH box signature appears at 255–258; sequence DEAH. The disordered stretch occupies residues 906-930; that stretch reads SSKKSNITHAPGNSGAIHEKSGGQE.

The protein belongs to the helicase family. RAD3/XPD subfamily.

The protein localises to the nucleus. The catalysed reaction is ATP + H2O = ADP + phosphate + H(+). In terms of biological role, a probable ATP-dependent DNA helicase implicated in DNA replication, DNA repair and the maintenance of genomic stability. Acts as an anti-recombinase to counteract toxic recombination and limit crossover during meiosis. Regulates meiotic recombination and crossover homeostasis by physically dissociating strand invasion events and thereby promotes noncrossover repair by meiotic synthesis dependent strand annealing (SDSA) as well as disassembly of D loop recombination intermediates. This is Regulator of telomere elongation helicase 1 homolog from Oryza sativa subsp. japonica (Rice).